Here is a 134-residue protein sequence, read N- to C-terminus: MRPGVAAVAAVRIFDAAKAPIQWEERNVTAIQGPGGKWMIPPEAKGPLKTPIAAGHPSMNLLLRKTFDLYANVRPCVSIEGYKTPYTDVNIVTIRRIAEFAFEYARDMANPTALLLSAVMMLRCSDFTEEICRR.

K37 is modified (N6-succinyllysine). T50 carries the phosphothreonine modification. Residues R64, R74, and R95 each contribute to the substrate site.

The protein belongs to the isocitrate and isopropylmalate dehydrogenases family. As to quaternary structure, heterooligomer of subunits alpha (IDH3A), beta (IDH3B), and gamma (IDH3G) in the apparent ratio of 2:1:1. The heterodimer containing one IDH3A and one IDH3B subunit and the heterodimer containing one IDH3A and one IDH3G subunit assemble into a heterotetramer (which contains two subunits of IDH3A, one of IDH3B and one of IDH3G) and further into the heterooctamer. Requires Mg(2+) as cofactor. Mn(2+) is required as a cofactor.

The protein localises to the mitochondrion. It carries out the reaction D-threo-isocitrate + NAD(+) = 2-oxoglutarate + CO2 + NADH. With respect to regulation, the heterotetramer and the heterodimer composed of IDH3A and IDH3G subunits can be allosterically activated by citrate (CIT) or/and ADP, and the two activators can act independently or synergistically. The heterodimer composed of IDH3A and IDH3B subunits cannot be allosterically regulated and the allosteric regulation of the heterotetramer is through the IDH3G subunit and not the IDH3B subunit. The IDH3G subunit contains the allosteric site which consists of a CIT-binding site and an ADP-binding site, and the binding of CIT and ADP causes conformational changes at the allosteric site which are transmitted to the active site in the catalytic subunit (IDH3A) through a cascade of conformational changes at the heterodimer interface, leading to stabilization of the isocitrate-binding at the active site and thus activation of the enzyme. ATP can activate the heterotetramer and the heterodimer composed of IDH3A and IDH3G subunits at low concentrations but inhibits their activities at high concentrations, whereas ATP exhibits only inhibitory effect on the heterodimer composed of IDH3A and IDH3B subunits. Functionally, catalytic subunit of the enzyme which catalyzes the decarboxylation of isocitrate (ICT) into alpha-ketoglutarate. The heterodimer composed of the alpha (IDH3A) and beta (IDH3B) subunits and the heterodimer composed of the alpha (IDH3A) and gamma (IDH3G) subunits, have considerable basal activity but the full activity of the heterotetramer (containing two subunits of IDH3A, one of IDH3B and one of IDH3G) requires the assembly and cooperative function of both heterodimers. This Mesocricetus auratus (Golden hamster) protein is Isocitrate dehydrogenase [NAD] subunit alpha, mitochondrial.